Reading from the N-terminus, the 534-residue chain is uncharacterized protein (534 aa).

Disordered stretches follow at residues 1-93 (MSSS…DDTG), 123-260 (SPES…LSSA), 313-349 (AAAT…TFPS), and 383-505 (PWGA…QGCP). The segment covering 35-45 (GPGPDPGPEPG) has biased composition (pro residues). Phosphoserine occurs at positions 87 and 123. The span at 145-161 (RGAAAQRCGEAARAEAG) shows a compositional bias: low complexity. Residues 230–239 (SPKDPRDTPR) show a composition bias toward basic and acidic residues.

This is an uncharacterized protein from Bos taurus (Bovine).